The following is a 1215-amino-acid chain: Inner capsid protein VP3 (1215 aa).

A disordered region spans residues 1–81 (MPRRPRRNAK…RVDNDGDVIT (81 aa)). A compositionally biased stretch (low complexity) spans 21 to 44 (LVAPAANASVSSTVNTTTSPTLAA). The segment at 118-141 (YRCNVCNAEFPSMSAMTEHLRTSH) adopts a C2H2-type zinc-finger fold.

It belongs to the turreted BTV-fold inner capsid family. Homodecamer; each decamer is made up of two conformers of VP2, called VP2A and VP2B. 12 homodecamers assemble to form an icosahedral capsid. Interacts with VP6.

The protein localises to the virion. In terms of biological role, inner capsid protein that self-assembles to form an icosahedral capsid with a T=2 symmetry, which consists of 120 copies of VP2, with channels at each of its five-fold vertices. This capsid constitutes the innermost concentric layer of the viral mature particle. The protein is Inner capsid protein VP3 (S3) of Ctenopharyngodon idella (Grass carp).